The chain runs to 139 residues: Large ribosomal subunit protein uL13 (139 aa).

It belongs to the universal ribosomal protein uL13 family. As to quaternary structure, part of the 50S ribosomal subunit.

In terms of biological role, this protein is one of the early assembly proteins of the 50S ribosomal subunit, although it is not seen to bind rRNA by itself. It is important during the early stages of 50S assembly. This is Large ribosomal subunit protein uL13 from Aliarcobacter butzleri (strain RM4018) (Arcobacter butzleri).